Reading from the N-terminus, the 259-residue chain is Ras-related protein Rab-34 (259 aa).

Methionine 1 carries the N-acetylmethionine modification. Positions 62, 63, 64, 65, 66, 78, 81, and 84 each coordinate GTP. Position 66 (threonine 66) interacts with Mg(2+). The Switch 1 signature appears at 71 to 89 (RFCKDTFDKNYKATIGVDF). 2 residues coordinate Mg(2+): threonine 84 and aspartate 107. The short motif at 108–127 (TAGQERFKCIASTYYRGAQA) is the Switch 2 element. Glycine 110, lysine 167, aspartate 169, and serine 198 together coordinate GTP. 2 positions are modified to phosphoserine: serine 241 and serine 244. Residues cysteine 257 and cysteine 258 are each lipidated (S-geranylgeranyl cysteine).

The protein belongs to the small GTPase superfamily. Rab family. As to quaternary structure, interacts with RILP. The GTP-bound form interacts with REP15. Mg(2+) serves as cofactor.

It is found in the cytoplasm. It localises to the golgi apparatus. The protein localises to the cytoplasmic vesicle. Its subcellular location is the phagosome. The protein resides in the phagosome membrane. It is found in the cell projection. It localises to the cilium. The protein localises to the cytoskeleton. Its subcellular location is the microtubule organizing center. The protein resides in the centrosome. It is found in the centriole. The enzyme catalyses GTP + H2O = GDP + phosphate + H(+). Regulated by guanine nucleotide exchange factors (GEFs) which promote the exchange of bound GDP for free GTP. Regulated by GTPase activating proteins (GAPs) which increase the GTP hydrolysis activity. Inhibited by GDP dissociation inhibitors (GDIs). In terms of biological role, the small GTPases Rab are key regulators of intracellular membrane trafficking, from the formation of transport vesicles to their fusion with membranes. Rabs cycle between an inactive GDP-bound form and an active GTP-bound form that is able to recruit to membranes different sets of downstream effectors directly responsible for vesicle formation, movement, tethering and fusion. RAB34 transports protein involved in the redistribution of lysosomes to the peri-Golgi region. Plays a role in the maturation of phagosomes that engulf pathogens, such as S.aureus and M.tuberculosis. Plays a role in the fusion of phagosomes with lysosomes. Involved in ciliogenesis. In particular, it is required for early steps of the intracellular cilium assembly pathway initiated by trafficking and docking of ciliary vesicles to the centrioles in the cytoplasm, followed by axoneme formation in the cytoplasm. After axoneme elongation, the centrioles migrate close to the cell surface so that ciliary vesicles can fuse with the plasma membrane to expose cilia to the extracellular space. It seems dispensable for ciliogenesis via the extracellular pathway where cilium assembly begins after migration and docking of the centriole to the plasma membrane. Also acts as a positive regulator of hedgehog signaling and regulates ciliary function. The chain is Ras-related protein Rab-34 from Homo sapiens (Human).